Reading from the N-terminus, the 225-residue chain is Small ribosomal subunit protein uS3 (225 aa).

In terms of domain architecture, KH type-2 spans 38 to 106 (LRAHLRRKLS…DVALNIVEIR (69 aa)).

The protein belongs to the universal ribosomal protein uS3 family. Part of the 30S ribosomal subunit. Forms a tight complex with proteins S10 and S14.

In terms of biological role, binds the lower part of the 30S subunit head. Binds mRNA in the 70S ribosome, positioning it for translation. The polypeptide is Small ribosomal subunit protein uS3 (Gluconacetobacter diazotrophicus (strain ATCC 49037 / DSM 5601 / CCUG 37298 / CIP 103539 / LMG 7603 / PAl5)).